Consider the following 466-residue polypeptide: Neuronal acetylcholine receptor subunit non-alpha-3 (466 aa).

The signal sequence occupies residues 1-28 (MKLQISGLLLVTAVAYATIEAPEEFVSL). Residues 29-235 (AEMEDTLLRN…VTYSFILKRL (207 aa)) lie on the Extracellular side of the membrane. 4 N-linked (GlcNAc...) asparagine glycosylation sites follow: Asn-54, Asn-141, Asn-169, and Asn-208. Cys-156 and Cys-170 form a disulfide bridge. The next 3 helical transmembrane spans lie at 236-260 (PLFY…VFYL), 268-285 (LLLS…LLVI), and 302-323 (YLLF…VINV). Topologically, residues 324–438 (HHRSSATYHP…WKFVAQVLDR (115 aa)) are cytoplasmic. The helical transmembrane segment at 439-456 (IFLWVFLTASVLGTILIF) threads the bilayer.

Belongs to the ligand-gated ion channel (TC 1.A.9) family. Acetylcholine receptor (TC 1.A.9.1) subfamily. Neuronal AChR seems to be composed of two different type of subunits: alpha and non-alpha (beta). In terms of tissue distribution, retina, tectum and brain.

It localises to the postsynaptic cell membrane. Its subcellular location is the cell membrane. In terms of biological role, after binding acetylcholine, the AChR responds by an extensive change in conformation that affects all subunits and leads to opening of an ion-conducting channel across the plasma membrane. The sequence is that of Neuronal acetylcholine receptor subunit non-alpha-3 from Carassius auratus (Goldfish).